We begin with the raw amino-acid sequence, 69 residues long: Putative membrane protein insertion efficiency factor (69 aa).

Belongs to the UPF0161 family.

The protein resides in the cell membrane. Its function is as follows. Could be involved in insertion of integral membrane proteins into the membrane. This chain is Putative membrane protein insertion efficiency factor, found in Clostridium botulinum (strain ATCC 19397 / Type A).